The sequence spans 182 residues: Large ribosomal subunit protein uL10 (182 aa).

It belongs to the universal ribosomal protein uL10 family. In terms of assembly, part of the ribosomal stalk of the 50S ribosomal subunit. The N-terminus interacts with L11 and the large rRNA to form the base of the stalk. The C-terminus forms an elongated spine to which L12 dimers bind in a sequential fashion forming a multimeric L10(L12)X complex.

Functionally, forms part of the ribosomal stalk, playing a central role in the interaction of the ribosome with GTP-bound translation factors. The chain is Large ribosomal subunit protein uL10 from Janthinobacterium sp. (strain Marseille) (Minibacterium massiliensis).